The primary structure comprises 390 residues: Protein shisa-9 (390 aa).

The N-terminal stretch at 1–22 (MTGIRAIFYYFLVDLLTLLCWA) is a signal peptide. Residues 23 to 134 (QGKGGQHFGS…DPSHDPTRDK (112 aa)) lie on the Extracellular side of the membrane. Asn-40 and Asn-74 each carry an N-linked (GlcNAc...) asparagine glycan. Residues 135–155 (TNLIVYIICGVVAVMVLVGIF) form a helical membrane-spanning segment. At 156-390 (TKLGLEKAHR…VTNSKTEVTV (235 aa)) the chain is on the cytoplasmic side.

Belongs to the shisa family. SHISA9 subfamily. As to quaternary structure, component of some AMPA receptors (ionotropic glutamate receptors) complex.

The protein localises to the cell projection. It is found in the dendritic spine membrane. It localises to the synapse. Its function is as follows. Regulator of short-term neuronal synaptic plasticity in the dentate gyrus. Associates with AMPA receptors (ionotropic glutamate receptors) in synaptic spines and promotes AMPA receptor desensitization at excitatory synapses. In Xenopus tropicalis (Western clawed frog), this protein is Protein shisa-9 (shisa9).